The chain runs to 416 residues: Probable pectate lyase 8 (416 aa).

The N-terminal stretch at 1 to 24 (MAVTKLILFASALLLTALFIGVNA) is a signal peptide. N-linked (GlcNAc...) asparagine glycans are attached at residues asparagine 23, asparagine 28, and asparagine 52. Positions 214, 238, and 242 each coordinate Ca(2+). Residue arginine 294 is part of the active site.

Belongs to the polysaccharide lyase 1 family. Ca(2+) is required as a cofactor.

It catalyses the reaction Eliminative cleavage of (1-&gt;4)-alpha-D-galacturonan to give oligosaccharides with 4-deoxy-alpha-D-galact-4-enuronosyl groups at their non-reducing ends.. The protein operates within glycan metabolism; pectin degradation; 2-dehydro-3-deoxy-D-gluconate from pectin: step 2/5. In Arabidopsis thaliana (Mouse-ear cress), this protein is Probable pectate lyase 8.